We begin with the raw amino-acid sequence, 86 residues long: Gas vesicle protein M (86 aa).

This sequence belongs to the gas vesicle GvpA family. In terms of assembly, gvpF to GvpM interact with each other in vitro, and may form multi-subunit complex(es). Might interact with GvpA.

Its subcellular location is the gas vesicle. Its function is as follows. Proteins GvpF to GvpM might be involved in nucleating gas vesicle formation. A minor component of the gas vesicle. Gas vesicles are small, hollow, gas filled protein structures found in some microorganisms. They allow positioning of halobacteria at the optimal depth for growth in the poorly aerated, shallow brine pools of their habitat. Expression of a 9.5 kb mc-vac DNA fragment containing 2 divergently transcribed regions (gvpD-gvpE-gvpF-gvpG-gvpH-gvpI-gvpJ-gvpK-gvpL-gvpM and gvpA-gvpC-gvpN-gvpO) allows H.volcanii to produce gas vesicles. The polypeptide is Gas vesicle protein M (Haloferax mediterranei (strain ATCC 33500 / DSM 1411 / JCM 8866 / NBRC 14739 / NCIMB 2177 / R-4) (Halobacterium mediterranei)).